The following is a 152-amino-acid chain: Large ribosomal subunit protein bL9 (152 aa).

It belongs to the bacterial ribosomal protein bL9 family.

Binds to the 23S rRNA. The polypeptide is Large ribosomal subunit protein bL9 (Saccharophagus degradans (strain 2-40 / ATCC 43961 / DSM 17024)).